Consider the following 101-residue polypeptide: Small ribosomal subunit protein uS14 (101 aa).

Belongs to the universal ribosomal protein uS14 family. Part of the 30S ribosomal subunit. Contacts proteins S3 and S10.

Binds 16S rRNA, required for the assembly of 30S particles and may also be responsible for determining the conformation of the 16S rRNA at the A site. The chain is Small ribosomal subunit protein uS14 from Alkalilimnicola ehrlichii (strain ATCC BAA-1101 / DSM 17681 / MLHE-1).